Here is a 152-residue protein sequence, read N- to C-terminus: UPF0178 protein Plav_1521 (152 aa).

The disordered stretch occupies residues 114-152; that stretch reads LRETGQSKGGGPAFSKEDRSRFLRSLEDTVQAIRRRPPP. Residues 128–140 show a composition bias toward basic and acidic residues; sequence SKEDRSRFLRSLE.

The protein belongs to the UPF0178 family.

This Parvibaculum lavamentivorans (strain DS-1 / DSM 13023 / NCIMB 13966) protein is UPF0178 protein Plav_1521.